A 286-amino-acid chain; its full sequence is MNPLFTQERRIFHKKLLDGNILATNNRGVVSNADGSNTRSFNIAKGIADLLHSETVSERLPGQTSGNAFEAICSEFVQSAFEKLQHIRPGDWNVKQVGSRNRLEIARYQQYAHLTALAKAAEENPELAAALGSDYTITPDIIVTRNLIADAEINRNEFLVDENIATYASLRAGNGNMPLLHASISCKWTIRSDRAQNARSEGLNLVRNRKGRLPHIVVVTAEPTPSRISSIALGTGEIDCVYHFALYELEQILQSLNYEDALDLFYIMVNGKRLKDISDLPLDLAV.

Mg(2+)-binding residues include Asp-140 and Cys-186.

In terms of assembly, homotetramer. Mg(2+) is required as a cofactor.

The enzyme catalyses Endonucleolytic cleavage of DNA to give specific double-stranded fragments with terminal 5'-phosphates.. Its function is as follows. A P subtype restriction enzyme that recognizes the double-stranded sequence 5'-GCCGGC-3' and cleaves after G-1. This chain is Type II restriction enzyme NgoMIV (ngoMIVR), found in Neisseria gonorrhoeae.